The following is a 442-amino-acid chain: 6-phospho-alpha-glucosidase 1 (442 aa).

6-72 (FSVLIAGGGS…PEVEFLATTD (67 aa)) contacts NAD(+). Residues Arg95 and Asn149 each contribute to the substrate site. Mn(2+) is bound at residue Cys171. Asp172 serves as the catalytic Proton donor. A Mn(2+)-binding site is contributed by His202. Tyr265 (proton acceptor) is an active-site residue. Arg285 contacts substrate.

This sequence belongs to the glycosyl hydrolase 4 family. Homodimer. May also form homotetramer. The cofactor is Mn(2+). Co(2+) serves as cofactor. Requires Ni(2+) as cofactor. Fe(2+) is required as a cofactor. It depends on Mg(2+) as a cofactor. The cofactor is NAD(+).

It carries out the reaction alpha-maltose 6'-phosphate + H2O = D-glucose 6-phosphate + D-glucose. Is inhibited by EDTA in vitro. Its function is as follows. Is probably involved in the catabolism of alpha-glycosides accumulated via a phosphoenolpyruvate-dependent phosphotransferase system (PEP-PTS). Hydrolyzes a wide variety of 6-phospho-alpha-D-glucosides including the five isomeric derivatives of sucrose, i.e. trehalulose-6'-phosphate, turanose-6'-phosphate, maltulose-6'-phosphate, leucrose-6'-phosphate, and palatinose-6'-phosphate, but is not active on sucrose-6-phosphate. Can also hydrolyze maltose-6'-phosphate and methyl-alpha-glucose-6-phosphate, and poorly, trehalose-6-phosphate. Fails to hydrolyze beta-O-linked phosphorylated disaccharides such as cellobiose-6'-phosphate and gentiobiose-6'-phosphate. Does not seem to be involved in maltose catabolism. This is 6-phospho-alpha-glucosidase 1 (simA) from Lacticaseibacillus paracasei (strain ATCC 334 / BCRC 17002 / CCUG 31169 / CIP 107868 / KCTC 3260 / NRRL B-441) (Lactobacillus paracasei).